A 333-amino-acid chain; its full sequence is MANIYYDSDCDLNSLKGKTIAVIGYGSQGHAQAQNMKDSGLKVIIGLKEGSKSIQDAKNAGFEVYSVSEASQKADIIQILAPDTIQADLYKKDIEPNLKKGDALVFSHGFNIHYDFIKPPKEVDVYMVAPKGPGHLVRRVYTEGGGVPCLIAIYQDSSGEAKKRALAHAAGVGGGRAGILETSFREETETDLFGEQVVLCGGLSNLIMAGFETLTEAGYDPEIAYFECLHEVKLITDLIYEGGLARMRFSISDTAEYGDYVSGPRVIDPGVKQRMKEVLNDIQKDKGAKFATNWMAETKAGYPNFKNMRDKNASHPIESVGKKLRSMMKWLSK.

A KARI N-terminal Rossmann domain is found at 2-182 (ANIYYDSDCD…GGGRAGILET (181 aa)). Residues 25-28 (YGSQ), Lys48, Ser51, Ser53, and 83-86 (DTIQ) contribute to the NADP(+) site. His108 is an active-site residue. Gly134 serves as a coordination point for NADP(+). Residues 183-331 (SFREETETDL…KKLRSMMKWL (149 aa)) enclose the KARI C-terminal knotted domain. Positions 191, 195, 227, and 231 each coordinate Mg(2+). Position 252 (Ser252) interacts with substrate.

It belongs to the ketol-acid reductoisomerase family. It depends on Mg(2+) as a cofactor.

It carries out the reaction (2R)-2,3-dihydroxy-3-methylbutanoate + NADP(+) = (2S)-2-acetolactate + NADPH + H(+). The catalysed reaction is (2R,3R)-2,3-dihydroxy-3-methylpentanoate + NADP(+) = (S)-2-ethyl-2-hydroxy-3-oxobutanoate + NADPH + H(+). It functions in the pathway amino-acid biosynthesis; L-isoleucine biosynthesis; L-isoleucine from 2-oxobutanoate: step 2/4. It participates in amino-acid biosynthesis; L-valine biosynthesis; L-valine from pyruvate: step 2/4. Functionally, involved in the biosynthesis of branched-chain amino acids (BCAA). Catalyzes an alkyl-migration followed by a ketol-acid reduction of (S)-2-acetolactate (S2AL) to yield (R)-2,3-dihydroxy-isovalerate. In the isomerase reaction, S2AL is rearranged via a Mg-dependent methyl migration to produce 3-hydroxy-3-methyl-2-ketobutyrate (HMKB). In the reductase reaction, this 2-ketoacid undergoes a metal-dependent reduction by NADPH to yield (R)-2,3-dihydroxy-isovalerate. This chain is Ketol-acid reductoisomerase (NADP(+)), found in Leptospira interrogans serogroup Icterohaemorrhagiae serovar copenhageni (strain Fiocruz L1-130).